The chain runs to 1505 residues: Probable serine/threonine-protein kinase irlD (1505 aa).

Over residues 1–18 the composition is skewed to basic residues; the sequence is MGPKKGKRSHSKNHHHHN. Disordered stretches follow at residues 1–30, 121–211, 548–571, and 862–1013; these read MGPK…NSGG, IPQP…NNIL, TTTT…DKEN, and EENE…TIAT. The span at 139–158 shows a compositional bias: low complexity; that stretch reads SISTTTTTTTATAIEIESSS. Residues 159 to 172 show a composition bias toward polar residues; that stretch reads GLTSNITDSTEIQL. Composition is skewed to low complexity over residues 173–209 and 548–561; these read DSTT…NSNN and TTTT…TTTT. Basic and acidic residues-rich tracts occupy residues 562 to 571 and 862 to 882; these read IDKDEKDKEN and EENE…EKKK. Residues 846–892 are a coiled coil; sequence IRTEESLKAEKDLLEQEENEKKRLKEKRKKEEKEKKKQQNLKQKSLI. Over residues 896-924 the composition is skewed to low complexity; that stretch reads TTTTTTTTPIPITVPIPTQTQTPTQTPTQ. Residues 925-943 show a composition bias toward pro residues; sequence TPIPTPIPTTPIPTTPIPI. 2 stretches are compositionally biased toward low complexity: residues 944–954 and 960–977; these read PIQLTPTTPKT and TPKT…KTPK. The span at 978 to 989 shows a compositional bias: polar residues; that stretch reads NSTLDKQTISTP. The Protein kinase domain maps to 1054 to 1324; sequence RKDEFIIGRG…TENILLHPFF (271 aa). ATP contacts are provided by residues 1060-1068 and Lys-1083; that span reads IGRGSNGTL. The active-site Proton acceptor is the Asp-1194. The KEN domain occupies 1327-1505; the sequence is HEKKVKFIDA…LIYFNDLIIK (179 aa).

It belongs to the protein kinase superfamily. Ser/Thr protein kinase family.

It carries out the reaction L-seryl-[protein] + ATP = O-phospho-L-seryl-[protein] + ADP + H(+). The catalysed reaction is L-threonyl-[protein] + ATP = O-phospho-L-threonyl-[protein] + ADP + H(+). In Dictyostelium discoideum (Social amoeba), this protein is Probable serine/threonine-protein kinase irlD (irlD).